The primary structure comprises 67 residues: DNA-directed RNA polymerases I, II, and III subunit RPABC5 (67 aa).

Zn(2+) is bound by residues C7, C10, C44, and C45.

This sequence belongs to the archaeal Rpo10/eukaryotic RPB10 RNA polymerase subunit family. Component of the RNA polymerase I (Pol I), RNA polymerase II (Pol II) and RNA polymerase III (Pol III) complexes consisting of at least 13, 12 and 17 subunits, respectively.

The protein localises to the nucleus. In terms of biological role, DNA-dependent RNA polymerase catalyzes the transcription of DNA into RNA using the four ribonucleoside triphosphates as substrates. Common component of RNA polymerases I, II and III which synthesize ribosomal RNA precursors, mRNA precursors and many functional non-coding RNAs, and a small RNAs, such as 5S rRNA and tRNAs, respectively. Pol II is the central component of the basal RNA polymerase II transcription machinery. Pols are composed of mobile elements that move relative to each other. In Pol II, RBP10 is part of the core element with the central large cleft. The protein is DNA-directed RNA polymerases I, II, and III subunit RPABC5 of Caenorhabditis briggsae.